The following is a 218-amino-acid chain: Cytochrome b6 (218 aa).

A helical transmembrane segment spans residues 35–55 (IFYCLGGITLVCFLIQFATGF). Cysteine 38 lines the heme c pocket. Histidine 89 and histidine 103 together coordinate heme b. A run of 3 helical transmembrane segments spans residues 93 to 113 (ASMM…TGGF), 119 to 139 (LTWV…VTGY), and 189 to 209 (LHTF…FLMI). Heme b is bound by residues histidine 190 and histidine 205.

The protein belongs to the cytochrome b family. PetB subfamily. In terms of assembly, the 4 large subunits of the cytochrome b6-f complex are cytochrome b6, subunit IV (17 kDa polypeptide, PetD), cytochrome f and the Rieske protein, while the 4 small subunits are PetG, PetL, PetM and PetN. The complex functions as a dimer. Heme b is required as a cofactor. The cofactor is heme c.

Its subcellular location is the cellular thylakoid membrane. In terms of biological role, component of the cytochrome b6-f complex, which mediates electron transfer between photosystem II (PSII) and photosystem I (PSI), cyclic electron flow around PSI, and state transitions. The protein is Cytochrome b6 of Prochlorococcus marinus (strain MIT 9301).